Reading from the N-terminus, the 115-residue chain is NADH-ubiquinone oxidoreductase chain 3 (115 aa).

The next 3 membrane-spanning stretches (helical) occupy residues 3-23 (FMLT…IAFW), 55-75 (FFLV…LLPL), and 84-104 (LEVM…SLAY).

This sequence belongs to the complex I subunit 3 family. As to quaternary structure, core subunit of respiratory chain NADH dehydrogenase (Complex I) which is composed of 45 different subunits. Interacts with TMEM186. Interacts with TMEM242.

The protein resides in the mitochondrion inner membrane. It carries out the reaction a ubiquinone + NADH + 5 H(+)(in) = a ubiquinol + NAD(+) + 4 H(+)(out). In terms of biological role, core subunit of the mitochondrial membrane respiratory chain NADH dehydrogenase (Complex I) which catalyzes electron transfer from NADH through the respiratory chain, using ubiquinone as an electron acceptor. Essential for the catalytic activity of complex I. This chain is NADH-ubiquinone oxidoreductase chain 3, found in Rhinolophus pumilus (Horseshoe bat).